The following is a 1060-amino-acid chain: Carbamoyl phosphate synthase large chain (1060 aa).

The segment at 1–401 (MPKRTDIRKI…SLLKAVRSLE (401 aa)) is carboxyphosphate synthetic domain. Positions 129, 169, 175, 176, 208, 210, 215, 241, 242, 243, 284, and 298 each coordinate ATP. One can recognise an ATP-grasp 1 domain in the interval 133–327 (KNLMNQLNEP…IAKMAAKIAV (195 aa)). Gln284, Glu298, and Asn300 together coordinate Mg(2+). Residues Gln284, Glu298, and Asn300 each coordinate Mn(2+). The tract at residues 402 to 546 (IGTAHLELDG…YTTYEQENES (145 aa)) is oligomerization domain. Residues 547–929 (LVSAKPSILV…ALYKAFEASG (383 aa)) form a carbamoyl phosphate synthetic domain region. The ATP-grasp 2 domain occupies 671 to 861 (DQLIQELNIP…MAQLATQLIL (191 aa)). Residues Arg707, Arg746, Leu748, Glu752, Gly777, Val778, His779, Ser780, Gln820, and Glu832 each contribute to the ATP site. The Mg(2+) site is built by Gln820, Glu832, and Asn834. Residues Gln820, Glu832, and Asn834 each contribute to the Mn(2+) site. An MGS-like domain is found at 930 to 1060 (MHLPSHGNVL…ESQSLLTKPL (131 aa)). The interval 930–1060 (MHLPSHGNVL…ESQSLLTKPL (131 aa)) is allosteric domain.

Belongs to the CarB family. As to quaternary structure, composed of two chains; the small (or glutamine) chain promotes the hydrolysis of glutamine to ammonia, which is used by the large (or ammonia) chain to synthesize carbamoyl phosphate. Tetramer of heterodimers (alpha,beta)4. Mg(2+) serves as cofactor. Mn(2+) is required as a cofactor.

The catalysed reaction is hydrogencarbonate + L-glutamine + 2 ATP + H2O = carbamoyl phosphate + L-glutamate + 2 ADP + phosphate + 2 H(+). It catalyses the reaction hydrogencarbonate + NH4(+) + 2 ATP = carbamoyl phosphate + 2 ADP + phosphate + 2 H(+). The protein operates within amino-acid biosynthesis; L-arginine biosynthesis; carbamoyl phosphate from bicarbonate: step 1/1. It functions in the pathway pyrimidine metabolism; UMP biosynthesis via de novo pathway; (S)-dihydroorotate from bicarbonate: step 1/3. Its function is as follows. Large subunit of the glutamine-dependent carbamoyl phosphate synthetase (CPSase). CPSase catalyzes the formation of carbamoyl phosphate from the ammonia moiety of glutamine, carbonate, and phosphate donated by ATP, constituting the first step of 2 biosynthetic pathways, one leading to arginine and/or urea and the other to pyrimidine nucleotides. The large subunit (synthetase) binds the substrates ammonia (free or transferred from glutamine from the small subunit), hydrogencarbonate and ATP and carries out an ATP-coupled ligase reaction, activating hydrogencarbonate by forming carboxy phosphate which reacts with ammonia to form carbamoyl phosphate. This is Carbamoyl phosphate synthase large chain from Latilactobacillus sakei subsp. sakei (strain 23K) (Lactobacillus sakei subsp. sakei).